The chain runs to 641 residues: MVAFRFVYIPLPFFFFFFFFFVFFSGVSQLQDQTATKKSVRILSKILIGDDGRVYACSDNDFFSFESNGSIAWSVHMNFKCNTDFAPVYSGFNQMLLLAENRILRVIFPRNGTKSEPELFFDPGETILGFAVSVSSSSVYITVKNHGLYAYNMFRQQLWIAEPKIERFGYRLGCRKDFDNCTFNSRPVIDSCEGSIYISNNEGELYSLSLRGTYYQWIQDFSLVDRFFTVTPGNNGLVYVVFPIKSLVFALDSFSGDILWQKTIGPLAETSASDPVIDSNSWASIGSLDGTLYSFSRTGDLYKIPKNAETDSVIQIEPLLDCSGYAVYVSQTKFEGMIDRVIEDYTYVSAKKPETAVFSLVVPETRSIYWSQSYSDQIPGLLLDEDLQHFVLDERIALAFVAASSSGNPFRCRSKHEKLSSSCSFAEPEHLDIYIGNERAIIWFLLFEFVIMVLFAALVRFCFIFWKKKKLQDRPFSTFLDKRRLLHRKSREIDKTITRLQNESTANESAVDKIGDLIQKRENVKRKLSSTYSLGRDIDESKSKLKDYVLPLYGGSSRSFSYRNRENESITIFQTPSDESSSEESYRDEHYDDVADDEHDEDDLDRKQKGKLLAHSEGSSNDGDGIASSRRSIYLKHIFDD.

Residues 1–29 form the signal peptide; the sequence is MVAFRFVYIPLPFFFFFFFFFVFFSGVSQ. The chain crosses the membrane as a helical span at residues 441-461; sequence IIWFLLFEFVIMVLFAALVRF. Residues 570-627 are disordered; the sequence is ITIFQTPSDESSSEESYRDEHYDDVADDEHDEDDLDRKQKGKLLAHSEGSSNDGDGIA. The span at 584–593 shows a compositional bias: basic and acidic residues; the sequence is ESYRDEHYDD. The span at 594-603 shows a compositional bias: acidic residues; sequence VADDEHDEDD.

Expressed in mature siliques and in pollen, mainly in the sperm cells. Detected in the egg cell within the female gametophyte.

Its subcellular location is the cell membrane. Required for micropylar pollen tube guidance. Plays a role during early embryo patterning. The polypeptide is Protein GAMETE EXPRESSED 3 (GEX3) (Arabidopsis thaliana (Mouse-ear cress)).